The primary structure comprises 219 residues: Predicted GPI-anchored protein 6 (219 aa).

An N-terminal signal peptide occupies residues 1-19; it reads MQFQTLLVVAGSLVASTLA. 3 N-linked (GlcNAc...) asparagine glycosylation sites follow: asparagine 21, asparagine 173, and asparagine 188. A lipid anchor (GPI-anchor amidated glycine) is attached at glycine 194. A propeptide spans 195–219 (removed in mature form); sequence GAVGGASNQITVGFAAIAGLAAILL.

This sequence belongs to the flocculin family. In terms of processing, the GPI-anchor is attached to the protein in the endoplasmic reticulum and serves to target the protein to the cell surface. There, the glucosamine-inositol phospholipid moiety is cleaved off and the GPI-modified mannoprotein is covalently attached via its lipidless GPI glycan remnant to the 1,6-beta-glucan of the outer cell wall layer.

Its subcellular location is the secreted. The protein localises to the cell wall. It localises to the membrane. Probable cell wall protein that participates directly in adhesive cell-cell interactions. The protein is Predicted GPI-anchored protein 6 (PGA6) of Candida albicans (strain SC5314 / ATCC MYA-2876) (Yeast).